Reading from the N-terminus, the 979-residue chain is Ankycorbin (979 aa).

Met1 carries the post-translational modification N-acetylmethionine. Position 11 is a phosphoserine (Ser11). ANK repeat units lie at residues 18 to 51, 52 to 81, 85 to 114, 118 to 147, 151 to 180, 184 to 213, and 217 to 247; these read KNDD…KHDS, EGKT…DVTA, SGHS…PAEN, SGKT…PINL, DGNI…DVNS, NGRT…DLSL, and LGHN…DADL. Residues 247–259 show a composition bias toward basic and acidic residues; it reads LKTPTKPKQHDQV. Residues 247 to 299 form a disordered region; the sequence is LKTPTKPKQHDQVSKISSERSGTPKKRKAPPPPISPTQLSDVSSPRSITSTPL. Residue Thr249 is modified to Phosphothreonine. A Nuclear localization signal motif is present at residues 270–276; sequence PKKRKAP. Ser281, Ser286, and Ser293 each carry phosphoserine. A compositionally biased stretch (polar residues) spans 282-299; it reads PTQLSDVSSPRSITSTPL. A phosphothreonine mark is found at Thr295 and Thr297. Residues Ser300, Ser304, Ser318, Ser327, Ser329, Ser340, Ser341, and Ser358 each carry the phosphoserine modification. Residues 349–374 are a coiled coil; it reads LVLLQAKVASLTLHNKELQDKLQAKS. 2 disordered regions span residues 392 to 429 and 446 to 467; these read TQTD…TDND and LESS…RTDT. Residues 430–943 are a coiled coil; that stretch reads VIIRQLQDSL…CKKHHQEVIS (514 aa). A compositionally biased stretch (basic and acidic residues) spans 446-457; sequence LESSEAEKKQLQ. The span at 458–467 shows a compositional bias: polar residues; the sequence is DELQSQRTDT. Ser513, Ser516, Ser667, Ser694, and Ser914 each carry phosphoserine.

In terms of assembly, interacts with PALLD. Associates with actin. However, does not bind F-actin directly. Highly expressed in testis, where it localizes to seminiferous tubules (at protein level). Expressed in ganglion cell layer and in Muller cell fibers of the retina (at protein level). In small intestine highly expressed at the apical and lateral borders of absorptive epithelia (at protein level). In liver highly expressed along the bile canaliculi (at protein level).

The protein localises to the cytoplasm. It is found in the cytoskeleton. It localises to the stress fiber. The protein resides in the cell cortex. Its subcellular location is the cell junction. The protein localises to the nucleus. Its function is as follows. Plays a role in actin regulation at the ectoplasmic specialization, a type of cell junction specific to testis. Important for establishment of sperm polarity and normal spermatid adhesion. May also promote integrity of Sertoli cell tight junctions at the blood-testis barrier. This is Ankycorbin (Rai14) from Mus musculus (Mouse).